The sequence spans 78 residues: MNPMIEFCVSNLAHGSQEARAILEKDPNLDVLEYGCLSYCGTCMESLFALVNGEVVMGETPAELVENIYTFIEENPMF.

This sequence belongs to the UPF0349 family.

The polypeptide is UPF0349 protein YuzB (yuzB) (Bacillus subtilis (strain 168)).